A 562-amino-acid polypeptide reads, in one-letter code: NAD-dependent malic enzyme (562 aa).

Tyrosine 101 acts as the Proton donor in catalysis. Residue arginine 154 coordinates NAD(+). The Proton acceptor role is filled by lysine 172. Positions 243, 244, and 267 each coordinate a divalent metal cation. NAD(+) is bound by residues aspartate 267 and asparagine 415.

Belongs to the malic enzymes family. As to quaternary structure, homotetramer. It depends on Mg(2+) as a cofactor. Mn(2+) is required as a cofactor.

The catalysed reaction is (S)-malate + NAD(+) = pyruvate + CO2 + NADH. It carries out the reaction oxaloacetate + H(+) = pyruvate + CO2. The chain is NAD-dependent malic enzyme from Shewanella woodyi (strain ATCC 51908 / MS32).